A 241-amino-acid chain; its full sequence is 2-C-methyl-D-erythritol 4-phosphate cytidylyltransferase (241 aa).

Belongs to the IspD/TarI cytidylyltransferase family. IspD subfamily. In terms of assembly, homodimer.

It catalyses the reaction 2-C-methyl-D-erythritol 4-phosphate + CTP + H(+) = 4-CDP-2-C-methyl-D-erythritol + diphosphate. It functions in the pathway isoprenoid biosynthesis; isopentenyl diphosphate biosynthesis via DXP pathway; isopentenyl diphosphate from 1-deoxy-D-xylulose 5-phosphate: step 2/6. In terms of biological role, catalyzes the formation of 4-diphosphocytidyl-2-C-methyl-D-erythritol from CTP and 2-C-methyl-D-erythritol 4-phosphate (MEP). The polypeptide is 2-C-methyl-D-erythritol 4-phosphate cytidylyltransferase (Yersinia pseudotuberculosis serotype I (strain IP32953)).